Consider the following 209-residue polypeptide: CASP-like protein 2A1 (209 aa).

At 1–38 (MSKMAEEKVLAAPATVDGGMQSSGDLQASSAAAARVRP) the chain is on the cytoplasmic side. A helical transmembrane segment spans residues 39 to 59 (VETLLRAAPLGLCVAAMAIML). Over 60 to 80 (RNSVTNEYGTVSYSDLGGFKY) the chain is Extracellular. Residues 81-101 (LVYANGLCAAYSLASAFYIAV) form a helical membrane-spanning segment. Residues 102–109 (PRPATLSR) lie on the Cytoplasmic side of the membrane. The helical transmembrane segment at 110–130 (SWVVFLLDQVFTYLILAAGAA) threads the bilayer. Topologically, residues 131–163 (SAELLYLAYNGDKEVTWSEACGVFGGFCRQART) are extracellular. The chain crosses the membrane as a helical span at residues 164–184 (SVAITFASVACYILLSLISSY). The Cytoplasmic portion of the chain corresponds to 185–209 (RLFSAYDPPQPSLGNKGVEIAAFPR).

It belongs to the Casparian strip membrane proteins (CASP) family. Homodimer and heterodimers.

It is found in the cell membrane. The sequence is that of CASP-like protein 2A1 from Oryza sativa subsp. indica (Rice).